Consider the following 123-residue polypeptide: Ribosome-binding factor A (123 aa).

This sequence belongs to the RbfA family. Monomer. Binds 30S ribosomal subunits, but not 50S ribosomal subunits or 70S ribosomes.

It is found in the cytoplasm. One of several proteins that assist in the late maturation steps of the functional core of the 30S ribosomal subunit. Associates with free 30S ribosomal subunits (but not with 30S subunits that are part of 70S ribosomes or polysomes). Required for efficient processing of 16S rRNA. May interact with the 5'-terminal helix region of 16S rRNA. In Trichlorobacter lovleyi (strain ATCC BAA-1151 / DSM 17278 / SZ) (Geobacter lovleyi), this protein is Ribosome-binding factor A.